The primary structure comprises 132 residues: Ribosome-binding factor A (132 aa).

Belongs to the RbfA family. Monomer. Binds 30S ribosomal subunits, but not 50S ribosomal subunits or 70S ribosomes.

The protein resides in the cytoplasm. Its function is as follows. One of several proteins that assist in the late maturation steps of the functional core of the 30S ribosomal subunit. Associates with free 30S ribosomal subunits (but not with 30S subunits that are part of 70S ribosomes or polysomes). Required for efficient processing of 16S rRNA. May interact with the 5'-terminal helix region of 16S rRNA. This is Ribosome-binding factor A from Bordetella avium (strain 197N).